The following is a 95-amino-acid chain: Protein RnfH (95 aa).

Belongs to the UPF0125 (RnfH) family.

This Erwinia tasmaniensis (strain DSM 17950 / CFBP 7177 / CIP 109463 / NCPPB 4357 / Et1/99) protein is Protein RnfH.